Reading from the N-terminus, the 456-residue chain is Proline--tRNA ligase (456 aa).

Belongs to the class-II aminoacyl-tRNA synthetase family. ProS type 3 subfamily. In terms of assembly, homodimer.

Its subcellular location is the cytoplasm. The enzyme catalyses tRNA(Pro) + L-proline + ATP = L-prolyl-tRNA(Pro) + AMP + diphosphate. In terms of biological role, catalyzes the attachment of proline to tRNA(Pro) in a two-step reaction: proline is first activated by ATP to form Pro-AMP and then transferred to the acceptor end of tRNA(Pro). The chain is Proline--tRNA ligase from Methanococcus aeolicus (strain ATCC BAA-1280 / DSM 17508 / OCM 812 / Nankai-3).